We begin with the raw amino-acid sequence, 241 residues long: Type III pantothenate kinase (241 aa).

ATP is bound at residue 6–13 (DVGNTRIK). A substrate-binding site is contributed by 94–97 (GIDR). Asp96 acts as the Proton acceptor in catalysis. K(+) is bound at residue Asp117. Thr120 is a binding site for ATP. Thr172 contributes to the substrate binding site.

This sequence belongs to the type III pantothenate kinase family. Homodimer. The cofactor is NH4(+). Requires K(+) as cofactor.

It is found in the cytoplasm. The catalysed reaction is (R)-pantothenate + ATP = (R)-4'-phosphopantothenate + ADP + H(+). Its pathway is cofactor biosynthesis; coenzyme A biosynthesis; CoA from (R)-pantothenate: step 1/5. Functionally, catalyzes the phosphorylation of pantothenate (Pan), the first step in CoA biosynthesis. The protein is Type III pantothenate kinase of Flavobacterium psychrophilum (strain ATCC 49511 / DSM 21280 / CIP 103535 / JIP02/86).